The chain runs to 862 residues: MGHQQSSMNPSRGDSHGDRHRHYDAGVSGPTSASDQDPYASRNGRGGRRNLVAAIVGGGSNNEVPERKETAAERQLRRLERERIARIEERERSIKEEHVDGGYLVTMGVYTGPEDFNKAIVRQLMIERRVAPFWRGLDDYQDDWTEHQLVAAGRGLPIPAADEVPAEDIAGPHSPDSANVSSSNLQNLMVPLASRTQSASYDTSLSLSPSHPAFSTPSSVPPLNAPTTSTSLLRPRSKTLGLRSSAKEPPAPDPAPREIQLPRDTQVNGQAIEAFLYKDAVECSICLIWYPPYLNRTRCCDQSICSECFVQIKRPEPHTPEHHGPPPIASENAEDTEMLVSEPAACPYCQRPEFGVTYEPPPFRRGLVYAKPSPEVANFSSAMSSSSSINSPPLTSSGLAAPRGDRRRATSLSANDSHVITTDRIRPDWSAKLEAANLRKAKKNAAASALHAAAFVLPGTSENRTYTFGRSRFGRNNRSDNSAEASGTATPPNRDASSRAVIESSGHARREDQDPNATRRMRRDDLEELMMAEAIRLSIAAEEERKKKANKEAAKEAVKQAKKQAKEDKKKEKKERKSIYGANGNSASSSMLNLGSSIAATFTGRRRGDSTASHLAIEVTPEEVEVPVQGKGKGVDRPSLANQGSSTDNGLPSGQHSDPSTSSSLLETHQSVTSPASPDKLSHIREMSTVSSAASSLVESGNGTNAQGSSTSIENPGTNGASSEGNEDGDSGTESMFNFQSLTALIEKEDDNEKTHSADHVENAHEASDSRHGSRDENASQDMDVSMETIRPADSPARVDNIDRNHSSTTGLQMLDTEIDTSIITPQLTITPETPAVMNPTEENGKQLGSSFTSRTNAEITQ.

The span at 1–12 shows a compositional bias: polar residues; sequence MGHQQSSMNPSR. Disordered stretches follow at residues 1–70, 201–261, 380–415, 465–524, 551–591, 605–735, 750–784, and 825–862; these read MGHQ…RKET, YDTS…EIQL, SSAM…LSAN, TYTF…MRRD, KEAA…SSSM, RRRG…GTES, DDNE…QDMD, and TPQL…EITQ. Positions 13-24 are enriched in basic and acidic residues; that stretch reads GDSHGDRHRHYD. The segment covering 201–218 has biased composition (polar residues); sequence YDTSLSLSPSHPAFSTPS. Low complexity predominate over residues 380-397; sequence SSAMSSSSSINSPPLTSS. Polar residues predominate over residues 465 to 491; the sequence is TYTFGRSRFGRNNRSDNSAEASGTATP. Residues 551 to 578 are compositionally biased toward basic and acidic residues; the sequence is KEAAKEAVKQAKKQAKEDKKKEKKERKS. The span at 579–591 shows a compositional bias: low complexity; that stretch reads IYGANGNSASSSM. Composition is skewed to polar residues over residues 640–676 and 688–724; these read LANQ…TSPA and STVS…ASSE. The segment covering 751 to 778 has biased composition (basic and acidic residues); sequence DNEKTHSADHVENAHEASDSRHGSRDEN. Positions 847 to 862 are enriched in polar residues; the sequence is QLGSSFTSRTNAEITQ.

Belongs to the SIP5 family.

It localises to the cytoplasm. In terms of biological role, may negatively regulate the snf1 kinase. In Sclerotinia sclerotiorum (strain ATCC 18683 / 1980 / Ss-1) (White mold), this protein is Protein sip5 (sip5).